The primary structure comprises 385 residues: Deoxyguanosinetriphosphate triphosphohydrolase-like protein (385 aa).

The region spanning 62–197 (RLTHSLEVAQ…VSLADDIAYS (136 aa)) is the HD domain.

This sequence belongs to the dGTPase family. Type 2 subfamily.

In Neorickettsia sennetsu (strain ATCC VR-367 / Miyayama) (Ehrlichia sennetsu), this protein is Deoxyguanosinetriphosphate triphosphohydrolase-like protein.